Consider the following 480-residue polypeptide: Glutamyl-tRNA(Gln) amidotransferase subunit A (480 aa).

Catalysis depends on charge relay system residues lysine 70 and serine 145. Serine 169 serves as the catalytic Acyl-ester intermediate.

It belongs to the amidase family. GatA subfamily. Heterotrimer of A, B and C subunits.

It catalyses the reaction L-glutamyl-tRNA(Gln) + L-glutamine + ATP + H2O = L-glutaminyl-tRNA(Gln) + L-glutamate + ADP + phosphate + H(+). Allows the formation of correctly charged Gln-tRNA(Gln) through the transamidation of misacylated Glu-tRNA(Gln) in organisms which lack glutaminyl-tRNA synthetase. The reaction takes place in the presence of glutamine and ATP through an activated gamma-phospho-Glu-tRNA(Gln). The protein is Glutamyl-tRNA(Gln) amidotransferase subunit A of Lactobacillus delbrueckii subsp. bulgaricus (strain ATCC 11842 / DSM 20081 / BCRC 10696 / JCM 1002 / NBRC 13953 / NCIMB 11778 / NCTC 12712 / WDCM 00102 / Lb 14).